The chain runs to 367 residues: Cytochrome-c peroxidase IdrP2 (367 aa).

Positions Met1 to Ala28 are cleaved as a signal peptide. Cytochrome c domains are found at residues Asp47–Gln157 and Ser200–Ser345. Heme c-binding residues include Cys69, Cys72, His73, Cys215, Cys218, and His219.

As to quaternary structure, the iodate reductase (Idr) complex is composed of a molybdopterin-dependent iodate reductase (IdrA and IdrB subunits) and two associated peroxidases (IdrP1 and IdrP2). It depends on heme c as a cofactor.

The protein resides in the periplasm. The enzyme catalyses 2 Fe(II)-[cytochrome c] + H2O2 + 2 H(+) = 2 Fe(III)-[cytochrome c] + 2 H2O. Involved in iodate respiration. May play a critical role in detoxification of inadvertent H(2)O(2) generated by the iodate reductase IdrA/IdrB. The sequence is that of Cytochrome-c peroxidase IdrP2 from Denitromonas iodatirespirans.